Consider the following 69-residue polypeptide: Beta-defensin 1 (69 aa).

Residues 1-21 form the signal peptide; the sequence is MKTHYFLLVMLFFLFSQMELG. The propeptide occupies 22–32; sequence AGILTSLGRRT. Cystine bridges form between Cys37/Cys66, Cys44/Cys59, and Cys49/Cys67.

Belongs to the beta-defensin family. In terms of assembly, monomer. Homodimer. In terms of tissue distribution, highly expressed in kidney.

It is found in the secreted. Its subcellular location is the membrane. Its function is as follows. Has bactericidal activity. May act as a ligand for C-C chemokine receptor CCR6. Positively regulates the sperm motility and bactericidal activity in a CCR6-dependent manner. Binds to CCR6 and triggers Ca2+ mobilization in the sperm which is important for its motility. The chain is Beta-defensin 1 (Defb1) from Rattus norvegicus (Rat).